The chain runs to 1080 residues: MAGENYCSVCEGIISTENDLAVCYKCKEEIFHKACGKKVFDSLRCLNCGPIEKRSLSHQIGEISKGKAKLETRTSRFTGINVTKEFIESGEYGISKGDDDDDGDYVGGDDSSSDDEYFGNPTVLNNYPTTMNNVDLNFPTFFLLNEDMKKRKQKIKEDGNNEEIKKIEQEEKMIIQEYQNEEILKFFGDRSCFKQTQLAYEAMVQCLKDLKESIERMFKVVSVKTLGDISSFISMSYPKKSLLDIRDIALELIGQSIDDSIHHIPTSILYTSSSSPEVAQLFQSVPSNVMMRIKSHQPFSSDISSHLCEPPTITLNPDCCNTFKSTVSTICHSLTKDYDVTKFPSPHFEDLSRWYSNYFSIPLIQEVIELFKQQQQQQQQQQQQQQQQQQQQQQQQQQQQQKDKLEEIMLVRTPVILVIEDFETWNSEVLSDLIHLLSAYRHRIPFVLSFSISTSADAIHKVLPYQVVSLLNLKSLHLRSQNEMFEQLVKHLFLKSQPYIISKKAYLYLYYNFKNSYMSLSTTISVLRHFIIDHFLENGLSYLTLDLSNFQIDLKDDDDDMDGCSTIKLEPENDSTDSTVNDEVGTGDNIDNDNVSTHGEEDTPDSLVKSDIECQTLSYSSDDERNDYDTSTDSDNCSNFHKKKPNSNNRIKSDLECNDNDKDNDDNDNDINENNNNINNNNNNNSNNDDNDKDSFGPKRIPNQRFVTLIQKLPSLNTDEIENSKISTNRKLNKLQSNLIIFKESRPIMLELYYTILSKFQKSKTLKYSELLKKISLNDRKSYETLRKTILTNPESKQSIETLLDLLKTSRHHFERIIKATNSLKLFQTPKSKKYQDLVKIENLILKCRTLSNNFKNLLLPPDEQSKSIKNEIKQQQQQQQQQQQQQQQQQHQQQQKIENEQKNWSIKKKREHQLRNIQKPTDSYFKIYSREFLDDIVSVIIEDYLYPPLVSVPLSEIFDFTQTVFITQSRFNFHTAEGINDNLIHSVRKLKCECCIDSLCGTMDDFSISFILLLRSGRYINYFDWLTSFCSIINGDNNPTPNLKARFIKSVDTFVSLELIKKTRKRKDHFEKIAFLTTS.

3 disordered regions span residues Tyr-92 to Ser-112, Thr-566 to Ile-701, and Ile-869 to Gln-902. Over residues Ile-651 to Asp-661 the composition is skewed to basic and acidic residues. The span at Lys-662–Ile-671 shows a compositional bias: acidic residues. Composition is skewed to low complexity over residues Asn-672 to Asn-688 and Gln-875 to Gln-896.

It belongs to the ORC3 family. In terms of assembly, ORC is composed of six subunits.

Its subcellular location is the nucleus. Its function is as follows. Component of the origin recognition complex (ORC) that binds origins of replication. DNA-binding is ATP-dependent, however specific DNA sequences that define origins of replication have not been identified so far. ORC is required to assemble the pre-replication complex necessary to initiate DNA replication. This is Origin recognition complex subunit 3 (orcC) from Dictyostelium discoideum (Social amoeba).